The sequence spans 221 residues: Stromal cell-derived factor 2-like protein 1 (221 aa).

The first 28 residues, 1 to 28 (MWSAGRGGAAWPVLLGLLLALLVPGGGA), serve as a signal peptide directing secretion. 3 consecutive MIR domains span residues 33-87 (AELV…IRGG), 95-150 (GSPV…VRCS), and 151-205 (GQHW…AMEG). Position 215 is a phosphoserine (Ser-215). A Prevents secretion from ER motif is present at residues 218-221 (HDEL).

Part of a large chaperone multiprotein complex comprising CABP1, DNAJB11, HSP90B1, HSPA5, HYOU, PDIA2, PDIA4, PPIB, SDF2L1, UGGT1 and very small amounts of ERP29, but not, or at very low levels, CALR nor CANX. As to expression, ubiquitously expressed with high expression in testis, moderate expression in the pancreas, spleen, prostate, small intestine and colon. Very low expression is seen in brain and skeletal muscle.

Its subcellular location is the endoplasmic reticulum lumen. The polypeptide is Stromal cell-derived factor 2-like protein 1 (SDF2L1) (Homo sapiens (Human)).